The primary structure comprises 165 residues: Phosphopantetheine adenylyltransferase (165 aa).

A substrate-binding site is contributed by Ser-10. ATP is bound by residues 10–11 and His-18; that span reads SF. Lys-42, Thr-79, and Arg-93 together coordinate substrate. ATP-binding positions include 94 to 96, Glu-104, and 129 to 135; these read GLR and VRPITAT.

This sequence belongs to the bacterial CoaD family. As to quaternary structure, homohexamer. Requires Mg(2+) as cofactor.

The protein localises to the cytoplasm. It catalyses the reaction (R)-4'-phosphopantetheine + ATP + H(+) = 3'-dephospho-CoA + diphosphate. The protein operates within cofactor biosynthesis; coenzyme A biosynthesis; CoA from (R)-pantothenate: step 4/5. Reversibly transfers an adenylyl group from ATP to 4'-phosphopantetheine, yielding dephospho-CoA (dPCoA) and pyrophosphate. The sequence is that of Phosphopantetheine adenylyltransferase from Nitrobacter winogradskyi (strain ATCC 25391 / DSM 10237 / CIP 104748 / NCIMB 11846 / Nb-255).